A 776-amino-acid chain; its full sequence is Isoamylase (776 aa).

Residues 1–26 form the signal peptide; sequence MKCPKILAALLGCAVLAGVPAMPAHA. Residues Asp154, Glu255, Thr256, Asn258, and Asp285 each coordinate Ca(2+). Asp401 acts as the Nucleophile in catalysis. Cys410 and Cys422 form a disulfide bridge. Catalysis depends on Glu461, which acts as the Proton donor. 2 disulfides stabilise this stretch: Cys546/Cys616 and Cys738/Cys766.

This sequence belongs to the glycosyl hydrolase 13 family. Monomer. It depends on Ca(2+) as a cofactor.

The catalysed reaction is Hydrolysis of (1-&gt;6)-alpha-D-glucosidic branch linkages in glycogen, amylopectin and their beta-limit dextrins.. In Pseudomonas sp. (strain SMP1), this protein is Isoamylase (iam).